The chain runs to 437 residues: Carbonic anhydrase 9 (437 aa).

The first 31 residues, 1–31, serve as a signal peptide directing secretion; that stretch reads MASLGPSPWAPLSTPAPTAQLLLFLLLQVSA. Residues 32–95 are proteoglycan-like (PG); the sequence is QPQGLSGMQG…RMEESLGLED (64 aa). The Extracellular portion of the chain corresponds to 32–390; it reads QPQGLSGMQG…HVNSCFTAGD (359 aa). The disordered stretch occupies residues 34–118; it reads QGLSGMQGEP…HGDEKGGGHS (85 aa). Acidic residues predominate over residues 50 to 79; the sequence is SGEDELGVDVLPSEEDAPEEADPPDGEDPP. The segment at 96 to 390 is catalytic; sequence LSTPEAPEHS…HVNSCFTAGD (295 aa). O-linked (GlcNAc...) threonine glycosylation occurs at Thr98. Residues 118-369 enclose the Alpha-carbonic anhydrase domain; that stretch reads SHWSYGGTLL…LNGRTIEASF (252 aa). A disulfide bond links Cys135 and Cys315. His179 (proton donor/acceptor) is an active-site residue. Zn(2+) contacts are provided by His205, His207, and His230. 311–312 lines the substrate pocket; sequence TT. An N-linked (GlcNAc...) asparagine glycan is attached at Asn325. The chain crosses the membrane as a helical span at residues 391–411; that stretch reads ILALVFGLLFAVTSIAFLLQL. Residues 412–437 are Cytoplasmic-facing; sequence RRQHRHRSGTKDRVSYSPAEMTETGA. Phosphotyrosine is present on Tyr427.

The protein belongs to the alpha-carbonic anhydrase family. Forms oligomers linked by disulfide bonds. The cofactor is Zn(2+). Post-translationally, asn-325 bears high-mannose type glycan structures.

The protein resides in the nucleus. The protein localises to the nucleolus. It is found in the cell membrane. Its subcellular location is the cell projection. It localises to the microvillus membrane. The enzyme catalyses hydrogencarbonate + H(+) = CO2 + H2O. Inhibited by acetazolamide. Catalyzes the interconversion between carbon dioxide and water and the dissociated ions of carbonic acid (i.e. bicarbonate and hydrogen ions). The protein is Carbonic anhydrase 9 (Ca9) of Mus musculus (Mouse).